Reading from the N-terminus, the 301-residue chain is Probable alpha-L-glutamate ligase (301 aa).

The ATP-grasp domain occupies 104-287; sequence LQLLSRRGIG…VAGIIIEHLE (184 aa). Residues K141, 178-179, D187, and 211-213 each bind ATP; these read EY and RSN. D248, E260, and N262 together coordinate Mg(2+). Mn(2+) is bound by residues D248, E260, and N262.

It belongs to the RimK family. The cofactor is Mg(2+). Mn(2+) serves as cofactor.

The polypeptide is Probable alpha-L-glutamate ligase (Pseudomonas fluorescens (strain SBW25)).